We begin with the raw amino-acid sequence, 389 residues long: UDP-N-acetylglucosamine--N-acetylmuramyl-(pentapeptide) pyrophosphoryl-undecaprenol N-acetylglucosamine transferase (389 aa).

UDP-N-acetyl-alpha-D-glucosamine is bound by residues 39 to 41, Asn157, Arg193, Ser221, Ile275, 294 to 299, and Gln320; these read TGG and ALTVSE.

The protein belongs to the glycosyltransferase 28 family. MurG subfamily.

It localises to the cell inner membrane. It carries out the reaction di-trans,octa-cis-undecaprenyl diphospho-N-acetyl-alpha-D-muramoyl-L-alanyl-D-glutamyl-meso-2,6-diaminopimeloyl-D-alanyl-D-alanine + UDP-N-acetyl-alpha-D-glucosamine = di-trans,octa-cis-undecaprenyl diphospho-[N-acetyl-alpha-D-glucosaminyl-(1-&gt;4)]-N-acetyl-alpha-D-muramoyl-L-alanyl-D-glutamyl-meso-2,6-diaminopimeloyl-D-alanyl-D-alanine + UDP + H(+). It participates in cell wall biogenesis; peptidoglycan biosynthesis. Its function is as follows. Cell wall formation. Catalyzes the transfer of a GlcNAc subunit on undecaprenyl-pyrophosphoryl-MurNAc-pentapeptide (lipid intermediate I) to form undecaprenyl-pyrophosphoryl-MurNAc-(pentapeptide)GlcNAc (lipid intermediate II). This chain is UDP-N-acetylglucosamine--N-acetylmuramyl-(pentapeptide) pyrophosphoryl-undecaprenol N-acetylglucosamine transferase, found in Saccharophagus degradans (strain 2-40 / ATCC 43961 / DSM 17024).